The primary structure comprises 324 residues: Carbonic anhydrase 15 (324 aa).

The signal sequence occupies residues 1-18 (MWALDFLLSFLLIQLAAQ). Residues 23-293 (GTWCYDSQDP…LGGRRISASP (271 aa)) enclose the Alpha-carbonic anhydrase domain. The active-site Proton acceptor is His90. Residues His122, His124, and His147 each coordinate Zn(2+). The active site involves Tyr155. Asn184, Asn194, and Asn203 each carry an N-linked (GlcNAc...) asparagine glycan. Residue 231–232 (TT) coordinates substrate. Positions 269-290 (LHPRPLTSNFRPQQPLGGRRIS) are disordered.

It belongs to the alpha-carbonic anhydrase family. It depends on Zn(2+) as a cofactor.

It is found in the secreted. The catalysed reaction is hydrogencarbonate + H(+) = CO2 + H2O. Repressed by coumarins. Its function is as follows. Reversible hydration of carbon dioxide. The sequence is that of Carbonic anhydrase 15 (Ca15) from Mus musculus (Mouse).